The chain runs to 538 residues: CTP synthase (538 aa).

The interval 1 to 267 is amidoligase domain; it reads MDRAKFIFVT…LTPIARRFNL (267 aa). S15 lines the CTP pocket. S15 is a UTP binding site. Residues 16–21 and D73 each bind ATP; that span reads SLGKGI. Mg(2+)-binding residues include D73 and E141. CTP is bound by residues 148 to 150, 188 to 193, and K224; these read DME and KTKPTQ. UTP contacts are provided by residues 188–193 and K224; that span reads KTKPTQ. The Glutamine amidotransferase type-1 domain occupies 292 to 538; it reads KIGFVGKYLS…DFIKSALSKS (247 aa). G351 is an L-glutamine binding site. Catalysis depends on C378, which acts as the Nucleophile; for glutamine hydrolysis. Residues 379–382, E402, and R469 each bind L-glutamine; that span reads LGMQ. Active-site residues include H513 and E515.

The protein belongs to the CTP synthase family. As to quaternary structure, homotetramer.

The enzyme catalyses UTP + L-glutamine + ATP + H2O = CTP + L-glutamate + ADP + phosphate + 2 H(+). The catalysed reaction is L-glutamine + H2O = L-glutamate + NH4(+). It catalyses the reaction UTP + NH4(+) + ATP = CTP + ADP + phosphate + 2 H(+). It participates in pyrimidine metabolism; CTP biosynthesis via de novo pathway; CTP from UDP: step 2/2. With respect to regulation, allosterically activated by GTP, when glutamine is the substrate; GTP has no effect on the reaction when ammonia is the substrate. The allosteric effector GTP functions by stabilizing the protein conformation that binds the tetrahedral intermediate(s) formed during glutamine hydrolysis. Inhibited by the product CTP, via allosteric rather than competitive inhibition. Functionally, catalyzes the ATP-dependent amination of UTP to CTP with either L-glutamine or ammonia as the source of nitrogen. Regulates intracellular CTP levels through interactions with the four ribonucleotide triphosphates. In Helicobacter pylori (strain ATCC 700392 / 26695) (Campylobacter pylori), this protein is CTP synthase.